A 778-amino-acid polypeptide reads, in one-letter code: IQ domain-containing protein E (778 aa).

Disordered regions lie at residues 1-71 (MSLG…LSSR) and 83-108 (SSKQ…HPPS). Positions 37-49 (KPPSTSPKSPYYS) are enriched in low complexity. Over residues 83 to 101 (SSKQGSVAQPPSPTLTSEH) the composition is skewed to polar residues. The stretch at 157–323 (LHMQKSDVDL…DLDRMLSNSP (167 aa)) forms a coiled coil. Ser322 carries the phosphoserine modification. 4 disordered regions span residues 348–392 (KKVS…EDLP), 443–462 (ETAR…LREE), 474–529 (EEAK…SEER), and 573–612 (LVRS…AEEN). Residues 352–362 (SSESPKQSTSE) show a composition bias toward low complexity. The stretch at 398-486 (EEQEHLQGTV…KREEKNSFVA (89 aa)) forms a coiled coil. 2 IQ domains span residues 553–582 (LDEA…PDSR) and 615–644 (QEEA…REIA). Positions 581–598 (SRSPSLPGLLSPLNQSSP) are enriched in low complexity. Positions 651-662 (TVSLTPSGSASP) are enriched in polar residues. Residues 651–778 (TVSLTPSGSA…LPRKKSPSPF (128 aa)) form a disordered region. Ser661 is modified (phosphoserine). Residues 672–686 (IRKELCASEELRETS) show a composition bias toward basic and acidic residues. Over residues 739–752 (PSPPELQPLSPPPV) the composition is skewed to pro residues.

As to quaternary structure, component of the EvC complex composed of EFCAB7, IQCE, EVC2 and EVC; built from two subcomplexes, EVC2:EVC and EFCAB7:IQCE. Interacts (via N-terminus) with EFCAB7 (via EF-hands 1 and 2); this interaction anchors the EVC-EVC2 complex in a signaling microdomain at the base of cilia and stimulates the Hedgehog (Hh) pathway. Interacts with EVC2 (via N-terminal end). Interacts with EVC.

It localises to the cell projection. The protein resides in the cilium membrane. Functionally, component of the EvC complex that positively regulates ciliary Hedgehog (Hh) signaling. Required for proper limb morphogenesis. The protein is IQ domain-containing protein E (Iqce) of Mus musculus (Mouse).